Consider the following 352-residue polypeptide: Ly6/PLAUR domain-containing protein 3 (352 aa).

The N-terminal stretch at 1-32 is a signal peptide; sequence MDAARRGDTQPVMWTTRWLLLLPLLLCEGAQA. Positions 35–128 constitute a UPAR/Ly6 1 domain; that stretch reads CYSCVQKADD…LNLTLRGLNP (94 aa). Residues Asn120, Asn131, Asn178, and Asn185 are each glycosylated (N-linked (GlcNAc...) asparagine). The UPAR/Ly6 2 domain maps to 142 to 224; the sequence is CYSCMGLSRE…GSCCQGPRCN (83 aa). Over residues 236–249 the composition is skewed to pro residues; sequence RIPPLVLLPPPTTP. Positions 236–330 are disordered; sequence RIPPLVLLPP…KGGAQIPSKG (95 aa). Low complexity predominate over residues 250-285; it reads APSTRTQNSSSTTSTTAPTTATTTIKPTTVQASHTS. Composition is skewed to basic and acidic residues over residues 286–300 and 309–320; these read STHE…EEGS and HQDRSNMGKFPE. Gly330 is lipidated: GPI-anchor amidated glycine. A propeptide spans 331 to 352 (removed in mature form); sequence GSDALGSWLSAILLTVVAGAML.

Interacts with AGR2 and AGR3. Binds laminin-1 and laminin-5. Interacts with LGALS3. In terms of tissue distribution, found predominantly on the basal layers of squamous epithelium. Expressed in the gravid uterus and on epithelial of the upper gastrointestinal tract. It has been found in tumor lines which metastasize via the lymphatic system.

Its subcellular location is the cell membrane. Its function is as follows. Supports cell migration. May be involved in tumor progression. In Rattus norvegicus (Rat), this protein is Ly6/PLAUR domain-containing protein 3 (Lypd3).